A 377-amino-acid polypeptide reads, in one-letter code: Flagellin D (377 aa).

Coiled coils occupy residues 103 to 129 (SNSK…IAET) and 310 to 339 (AFQN…IKDT).

It belongs to the bacterial flagellin family. In terms of assembly, heteromer of multiple flagellin subunits including FlaA, FlaB, FlaC, FlaD and FlaE.

It is found in the secreted. The protein resides in the bacterial flagellum. Its function is as follows. Flagellin is the subunit protein which polymerizes to form the filaments of bacterial flagella. FlaD is not essential for flagellar synthesis and motility. This is Flagellin D (flaD) from Vibrio cholerae serotype O1 (strain ATCC 39315 / El Tor Inaba N16961).